Reading from the N-terminus, the 379-residue chain is 3-dehydroquinate synthase (379 aa).

NAD(+)-binding positions include 113–117 (GVIGD), 137–138 (TS), Lys-150, and Lys-159. Zn(2+) is bound by residues Glu-192, His-256, and His-274.

It belongs to the sugar phosphate cyclases superfamily. Dehydroquinate synthase family. It depends on Co(2+) as a cofactor. Requires Zn(2+) as cofactor. NAD(+) is required as a cofactor.

The protein resides in the cytoplasm. The catalysed reaction is 7-phospho-2-dehydro-3-deoxy-D-arabino-heptonate = 3-dehydroquinate + phosphate. Its pathway is metabolic intermediate biosynthesis; chorismate biosynthesis; chorismate from D-erythrose 4-phosphate and phosphoenolpyruvate: step 2/7. Catalyzes the conversion of 3-deoxy-D-arabino-heptulosonate 7-phosphate (DAHP) to dehydroquinate (DHQ). The chain is 3-dehydroquinate synthase from Zymomonas mobilis subsp. mobilis (strain ATCC 31821 / ZM4 / CP4).